The following is a 412-amino-acid chain: Putative disintegrin and metalloproteinase domain-containing protein 5 (412 aa).

A Disintegrin domain is found at 111–199 (EKYADTNILL…YCLPDTYVRD (89 aa)). An EGF-like domain is found at 351–385 (NLKLCDASNHCDRHGVCNNFNHCHCEKGYNPPYCQ).

Interacts with TEX101. Highly expressed in testis.

This is a non catalytic metalloprotease-like protein. This Homo sapiens (Human) protein is Putative disintegrin and metalloproteinase domain-containing protein 5 (ADAM5).